The sequence spans 493 residues: Vinyl phenol reductase (493 aa).

Positions 19, 38, 46, 50, 52, 156, 224, 448, and 467 each coordinate FAD.

The protein belongs to the FAD-dependent oxidoreductase 2 family. FRD/SDH subfamily. The cofactor is FAD.

It catalyses the reaction 4-vinylphenol + NADH + H(+) = 4-ethylphenol + NAD(+). The enzyme catalyses 3,4-dihydroxystyrene + NADH + H(+) = 4-ethylcatechol + NAD(+). The catalysed reaction is 2-methoxy-4-vinylphenol + NADH + H(+) = 4-ethyl-2-methoxyphenol + NAD(+). Its function is as follows. Involved in the production of ethylphenols during the degradation of hydroxycinnamic acids. Catalyzes the reduction of vinylphenols (4-vinylphenol (4-hydroxystyrene), 4-vinylcatechol (3,4-dihydroxystyrene), and 4-vinylguaiacol (2-methoxy-4-vinylphenol)) to their corresponding ethylphenols (4-ethylphenol, 4-ethylcatechol, and 4-ethylguaiacol, respectively) in the presence of NADH. These compounds are considered the most important flavor components of fermented soy sauce, and, on the other hand, are considered off flavor and responsible for sensorial wine and cider alteration. The 4-ethylphenol produced by the gut bacteria L.plantarum strain WCFS1 can get subsequent sulfation to 4-ethylphenyl sulfate (4EPS) by host sulfotransferase (SULT1A1); 4EPS can enter the brain and seems to alter brain activity. Therefore, this enzyme likely plays a role in gut microbiota-host metabolic interactions. The protein is Vinyl phenol reductase of Lactiplantibacillus plantarum (strain ATCC BAA-793 / NCIMB 8826 / WCFS1) (Lactobacillus plantarum).